A 269-amino-acid polypeptide reads, in one-letter code: Homocitrate synthase subunit alpha (269 aa).

The Pyruvate carboxyltransferase domain maps to 3-255 (INIVDTTLRD…IYTGDFEDII (253 aa)).

It belongs to the alpha-IPM synthase/homocitrate synthase family. Heterodimer of an alpha and an omega chain.

The enzyme catalyses acetyl-CoA + 2-oxoglutarate + H2O = (2R)-homocitrate + CoA + H(+). Functionally, this protein is a Fe-Mo-cofactor biosynthetic component. The sequence is that of Homocitrate synthase subunit alpha (nifV-ALPHA) from Clostridium pasteurianum.